We begin with the raw amino-acid sequence, 206 residues long: Small ribosomal subunit protein uS4 (206 aa).

One can recognise an S4 RNA-binding domain in the interval 96–156 (GRLDNVVYRM…EKAKKQARIK (61 aa)).

The protein belongs to the universal ribosomal protein uS4 family. In terms of assembly, part of the 30S ribosomal subunit. Contacts protein S5. The interaction surface between S4 and S5 is involved in control of translational fidelity.

Functionally, one of the primary rRNA binding proteins, it binds directly to 16S rRNA where it nucleates assembly of the body of the 30S subunit. With S5 and S12 plays an important role in translational accuracy. The polypeptide is Small ribosomal subunit protein uS4 (Aeromonas salmonicida (strain A449)).